A 497-amino-acid chain; its full sequence is UDP-N-acetylmuramoyl-L-alanyl-D-glutamate--2,6-diaminopimelate ligase (497 aa).

Positions 27 and 29 each coordinate UDP-N-acetyl-alpha-D-muramoyl-L-alanyl-D-glutamate. 116 to 122 (GTNGKTT) lines the ATP pocket. UDP-N-acetyl-alpha-D-muramoyl-L-alanyl-D-glutamate-binding positions include Asn157, 158-159 (TT), Ser185, Gln191, and Arg193. Lys225 carries the post-translational modification N6-carboxylysine. Residues Arg392, 416 to 419 (DNPR), Gly467, and Glu471 contribute to the meso-2,6-diaminopimelate site. The Meso-diaminopimelate recognition motif motif lies at 416–419 (DNPR).

The protein belongs to the MurCDEF family. MurE subfamily. The cofactor is Mg(2+). In terms of processing, carboxylation is probably crucial for Mg(2+) binding and, consequently, for the gamma-phosphate positioning of ATP.

The protein localises to the cytoplasm. It catalyses the reaction UDP-N-acetyl-alpha-D-muramoyl-L-alanyl-D-glutamate + meso-2,6-diaminopimelate + ATP = UDP-N-acetyl-alpha-D-muramoyl-L-alanyl-gamma-D-glutamyl-meso-2,6-diaminopimelate + ADP + phosphate + H(+). It participates in cell wall biogenesis; peptidoglycan biosynthesis. In terms of biological role, catalyzes the addition of meso-diaminopimelic acid to the nucleotide precursor UDP-N-acetylmuramoyl-L-alanyl-D-glutamate (UMAG) in the biosynthesis of bacterial cell-wall peptidoglycan. The sequence is that of UDP-N-acetylmuramoyl-L-alanyl-D-glutamate--2,6-diaminopimelate ligase from Buchnera aphidicola subsp. Schizaphis graminum (strain Sg).